A 345-amino-acid chain; its full sequence is Nicotinate-nucleotide--dimethylbenzimidazole phosphoribosyltransferase (345 aa).

Glu-312 serves as the catalytic Proton acceptor.

Belongs to the CobT family.

It catalyses the reaction 5,6-dimethylbenzimidazole + nicotinate beta-D-ribonucleotide = alpha-ribazole 5'-phosphate + nicotinate + H(+). The protein operates within nucleoside biosynthesis; alpha-ribazole biosynthesis; alpha-ribazole from 5,6-dimethylbenzimidazole: step 1/2. Catalyzes the synthesis of alpha-ribazole-5'-phosphate from nicotinate mononucleotide (NAMN) and 5,6-dimethylbenzimidazole (DMB). This is Nicotinate-nucleotide--dimethylbenzimidazole phosphoribosyltransferase from Phocaeicola vulgatus (strain ATCC 8482 / DSM 1447 / JCM 5826 / CCUG 4940 / NBRC 14291 / NCTC 11154) (Bacteroides vulgatus).